The sequence spans 121 residues: Basic phospholipase A2 homolog BnSP-7 (121 aa).

7 disulfides stabilise this stretch: Cys-26–Cys-115, Cys-28–Cys-44, Cys-43–Cys-95, Cys-49–Cys-121, Cys-50–Cys-88, Cys-57–Cys-81, and Cys-75–Cys-86. Positions 105 to 117 (KKYRYHLKPFCKK) are important for membrane-damaging activities in eukaryotes and bacteria; heparin-binding.

It belongs to the phospholipase A2 family. Group II subfamily. K49 sub-subfamily. In terms of assembly, homodimer; non-covalently linked (probable alternative/compact dimer conformation in solution). Expressed by the venom gland.

It is found in the secreted. Its activity is regulated as follows. Heparin inhibits the neuromuscular effect, myotoxin activity and edema-inducing effects. Bromophenacyl bromide (BPB) inhibits the neuromuscular effect, the myotoxin activity and edema-inducing effects. Snake venom phospholipase A2 (PLA2) that lacks enzymatic activity. Is myotoxic and displays edema-inducing activity. Displays bactericidal activity and promotes the blockage of the neuromuscular contraction of the chick biventer cervicis muscle. Also disrupts artificial membranes, and provokes tissue damages characterized by edema, necrosis and inflammation. May act as pro-inflammatory mediators, inducing metalloproteinase and cytokine production from the inflammatory and satellite cells. A model of myotoxic mechanism has been proposed: an apo Lys49-PLA2 is activated by the entrance of a hydrophobic molecule (e.g. fatty acid) at the hydrophobic channel of the protein leading to a reorientation of a monomer. This reorientation causes a transition between 'inactive' to 'active' states, causing alignment of C-terminal and membrane-docking sites (MDoS) side-by-side and putting the membrane-disruption sites (MDiS) in the same plane, exposed to solvent and in a symmetric position for both monomers. The MDoS region stabilizes the toxin on membrane by the interaction of charged residues with phospholipid head groups. Subsequently, the MDiS region destabilizes the membrane with penetration of hydrophobic residues. This insertion causes a disorganization of the membrane, allowing an uncontrolled influx of ions (i.e. calcium and sodium), and eventually triggering irreversible intracellular alterations and cell death. This is Basic phospholipase A2 homolog BnSP-7 from Bothrops pauloensis (Neuwied's lancehead).